The chain runs to 309 residues: Glutaminase (309 aa).

Residues S65, N117, E162, N169, Y193, Y245, and V263 each coordinate substrate.

Belongs to the glutaminase family. Homotetramer.

It catalyses the reaction L-glutamine + H2O = L-glutamate + NH4(+). This Shouchella clausii (strain KSM-K16) (Alkalihalobacillus clausii) protein is Glutaminase.